Reading from the N-terminus, the 616-residue chain is Vitamin B12 transporter BtuB (616 aa).

The first 20 residues, 1 to 20, serve as a signal peptide directing secretion; it reads MIKKISLLTALSVTAFSGWA. Positions 26–33 match the TonB box motif; the sequence is DSLVVTAN. Positions 38 to 152 constitute a TBDR plug domain; the sequence is PVNTVLAPTS…IGGVVNIITT (115 aa). Residues Leu-83, Ser-85, Asn-92, and 110–111 each bind cyanocob(III)alamin; that span reads VT. One can recognise a TBDR beta-barrel domain in the interval 155–616; sequence KDGTTLNAGI…EYTLSGSYTF (462 aa). Beta stranded transmembrane passes span 158 to 165, 169 to 178, and 184 to 195; these read TTLNAGIG, YQNYGGSTQQ, and TRVTLAGDYTYT. Positions 199, 211, 213, and 215 each coordinate Ca(2+). Transmembrane regions (beta stranded) follow at residues 217 to 227 and 232 to 248; these read FMNKTLYGALE and DQWTGFVRGYGYSNRTA. Ca(2+)-binding residues include Tyr-249, Asp-250, and Asp-263. A run of 17 beta stranded transmembrane segments spans residues 265–279, 281–298, 311–327, 330–339, 355–371, 373–383, 387–402, 405–419, 436–445, 451–460, 475–492, 496–511, 519–531, 537–552, 560–574, 587–598, and 604–616; these read RQLYSQTWDAGLRFN, DLFHSQLLSSYSHSKDYN, TLDEIKQYNVQWTNAVD, HGNIGAGVDW, YDLRNTGVYLTALQKFG, VTLEGAVRSDD, FGRHGTWQSSAAWEFI, YRFIASYGTAYKAPN, ESKQWEGAFE, VNWRVSAYRN, YYNVGKARIKGVEATASF, PLTHTLGYDYVDARNA, RRAKQQVKYQLDT, DWSLTYHYLGTRYDTD, NVKLGGVSLWDVAVS, IANLFDKDYETA, and AGREYTLSGSYTF. Residue Thr-311 coordinates cyanocob(III)alamin. Residue Arg-519 participates in cyanocob(III)alamin binding. The TonB C-terminal box signature appears at 599–616; it reads YGYATAGREYTLSGSYTF.

It belongs to the TonB-dependent receptor family. BtuB (TC 1.B.14.3.1) subfamily.

It localises to the cell outer membrane. In terms of biological role, involved in the active translocation of vitamin B12 (cyanocobalamin) across the outer membrane to the periplasmic space. It derives its energy for transport by interacting with the trans-periplasmic membrane protein TonB. The chain is Vitamin B12 transporter BtuB from Cronobacter sakazakii (strain ATCC BAA-894) (Enterobacter sakazakii).